Here is an 871-residue protein sequence, read N- to C-terminus: MERHCLFFVIFSLILHLVQAQDPIGFINLDCGLSIQGSPYKESSTGLTYTSDDGFVQSGKIGKITKELESLYKKPERTLRYFPDGVRNCFSLNVTRGTKYLIKPTFLYGNYDGRNVIPDFDLYIGPNMWITVNTDNTIKEILHVSKSNTLQVCLVKTGTSIPYINTLELRPLADDIYTNESGSLNYLFRVYYSNLKGYIEYPDDVHDRIWKQILPYQDWQILTTNLQINVSNDYDLPQRVMKTAVTPIKASTTTMEFPWNLEPPTSQFYLFLHFAELQSLQANETREFNVVLNGNVTFKSYSPKFLEMQTVYSTAPKQCDGGKCLLQLVKTSRSTLPPLINAMEAYTVLDFPQIETNVDEVIAIKNIQSTYGLSKTTWQGDPCVPKKFLWDGLNCNNSDDSTPPIITSLNLSSSGLTGIIVLTIQNLANLQELDLSNNNLSGGVPEFLADMKSLLVINLSGNNLSGVVPQKLIEKKMLKLNIEGNPKLNCTVESCVNKDEEGGRQIKSMTIPIVASIGSVVAFTVALMIFCVVRKNNPSNDEAPTSCMLPADSRSSEPTIVTKNKKFTYAEVLTMTNNFQKILGKGGFGIVYYGSVNGTEQVAVKMLSHSSAQGYKQFKAEVELLLRVHHKNLVGLVGYCEEGDKLALIYEYMANGDLDEHMSGKRGGSILNWGTRLKIALEAAQGLEYLHNGCKPLMVHRDVKTTNILLNEHFDTKLADFGLSRSFPIEGETHVSTVVAGTIGYLDPEYYRTNWLTEKSDVYSFGVVLLVMITNQPVIDQNREKRHIAEWVGGMLTKGDIKSITDPNLLGDYNSGSVWKAVELAMSCMNPSSMTRPTMSQVVFELKECLASESSREVSMTFGTEVAPMAR.

The signal sequence occupies residues 1–20 (MERHCLFFVIFSLILHLVQA). At 21-512 (QDPIGFINLD…GRQIKSMTIP (492 aa)) the chain is on the extracellular side. N-linked (GlcNAc...) asparagine glycans are attached at residues Asn-93, Asn-179, Asn-229, Asn-283, Asn-295, Asn-396, Asn-410, Asn-439, Asn-458, Asn-463, and Asn-489. 3 LRR repeats span residues 405 to 426 (IITS…TIQN), 429 to 449 (NLQE…EFLA), and 453 to 474 (SLLV…KLIE). A helical membrane pass occupies residues 513–533 (IVASIGSVVAFTVALMIFCVV). At 534-871 (RKNNPSNDEA…FGTEVAPMAR (338 aa)) the chain is on the cytoplasmic side. Position 568 is a phosphothreonine (Thr-568). In terms of domain architecture, Protein kinase spans 577–850 (NNFQKILGKG…QVVFELKECL (274 aa)). Residues 583–591 (LGKGGFGIV) and Lys-605 contribute to the ATP site. Tyr-650 is subject to Phosphotyrosine. The Proton acceptor role is filled by Asp-702. Ser-736 carries the phosphoserine modification. Phosphothreonine is present on residues Thr-737 and Thr-742. Tyr-750 bears the Phosphotyrosine mark.

This sequence belongs to the protein kinase superfamily. Ser/Thr protein kinase family.

It is found in the membrane. It carries out the reaction L-seryl-[protein] + ATP = O-phospho-L-seryl-[protein] + ADP + H(+). The catalysed reaction is L-threonyl-[protein] + ATP = O-phospho-L-threonyl-[protein] + ADP + H(+). The polypeptide is Probable LRR receptor-like serine/threonine-protein kinase At1g51810 (Arabidopsis thaliana (Mouse-ear cress)).